Here is a 317-residue protein sequence, read N- to C-terminus: Porphobilinogen deaminase (317 aa).

S-(dipyrrolylmethanemethyl)cysteine is present on cysteine 245.

This sequence belongs to the HMBS family. Monomer. Dipyrromethane is required as a cofactor.

It catalyses the reaction 4 porphobilinogen + H2O = hydroxymethylbilane + 4 NH4(+). It participates in porphyrin-containing compound metabolism; protoporphyrin-IX biosynthesis; coproporphyrinogen-III from 5-aminolevulinate: step 2/4. It functions in the pathway porphyrin-containing compound metabolism; chlorophyll biosynthesis. Functionally, tetrapolymerization of the monopyrrole PBG into the hydroxymethylbilane pre-uroporphyrinogen in several discrete steps. The sequence is that of Porphobilinogen deaminase from Synechococcus sp. (strain CC9902).